Consider the following 447-residue polypeptide: Cobyrinate a,c-diamide synthase (447 aa).

The 188-residue stretch at 252–439 folds into the GATase cobBQ-type domain; the sequence is KIAIAFDESF…AHQHAVGNPY (188 aa). Catalysis depends on cysteine 331, which acts as the Nucleophile.

It belongs to the CobB/CbiA family. Mg(2+) is required as a cofactor.

It catalyses the reaction cob(II)yrinate + 2 L-glutamine + 2 ATP + 2 H2O = cob(II)yrinate a,c diamide + 2 L-glutamate + 2 ADP + 2 phosphate + 2 H(+). The enzyme catalyses Ni-sirohydrochlorin + 2 L-glutamine + 2 ATP + 2 H2O = Ni-sirohydrochlorin a,c-diamide + 2 L-glutamate + 2 ADP + 2 phosphate + 2 H(+). The protein operates within cofactor biosynthesis; adenosylcobalamin biosynthesis; cob(II)yrinate a,c-diamide from sirohydrochlorin (anaerobic route): step 10/10. Its function is as follows. Catalyzes the ATP-dependent amidation of the two carboxylate groups at positions a and c of cobyrinate, using either L-glutamine or ammonia as the nitrogen source. Involved in the biosynthesis of the unique nickel-containing tetrapyrrole coenzyme F430, the prosthetic group of methyl-coenzyme M reductase (MCR), which plays a key role in methanogenesis and anaerobic methane oxidation. Catalyzes the ATP-dependent amidation of the two carboxylate groups at positions a and c of Ni-sirohydrochlorin, using L-glutamine or ammonia as the nitrogen source. The sequence is that of Cobyrinate a,c-diamide synthase from Methanococcus vannielii (strain ATCC 35089 / DSM 1224 / JCM 13029 / OCM 148 / SB).